Reading from the N-terminus, the 148-residue chain is MSVEIESIEHELEESIASLRQAGIRITPQRQAILRYLISSHTHPTADEIYQALSPDFPNISVATIYNNLRVFKDIGIVKELTYGDSSSRFDFNTHNHYHIICEQCGKIVDFQYPQLNEIERLAQHMTDFDVTHHRMEIYGVCKECQDK.

Residues 1–84 (MSVEIESIEH…IGIVKELTYG (84 aa)) are DNA-binding. C102, C105, C142, and C145 together coordinate Zn(2+).

The protein belongs to the Fur family.

The protein localises to the cytoplasm. Its function is as follows. Manganese-dependent repressor that controls a regulon of oxidative stress resistance and iron-storage proteins. May act as a hydrogen peroxide and organic hydroperoxide sensor. This is Peroxide-responsive repressor PerR (perR) from Staphylococcus aureus (strain Mu50 / ATCC 700699).